The primary structure comprises 179 residues: Large ribosomal subunit protein uL6 (179 aa).

The protein belongs to the universal ribosomal protein uL6 family. Part of the 50S ribosomal subunit.

Functionally, this protein binds to the 23S rRNA, and is important in its secondary structure. It is located near the subunit interface in the base of the L7/L12 stalk, and near the tRNA binding site of the peptidyltransferase center. The protein is Large ribosomal subunit protein uL6 of Leptospira biflexa serovar Patoc (strain Patoc 1 / ATCC 23582 / Paris).